The following is a 461-amino-acid chain: Elongation factor 1-alpha, oocyte form (461 aa).

Position 2 is a n,N,N-trimethylglycine (Gly-2). The tr-type G domain occupies 5-242; it reads KIHINIVVIG…DCIIPPQRPT (238 aa). Residues 14–21 form a G1 region; that stretch reads GHVDSGKS. GTP is bound at residue 14–21; that stretch reads GHVDSGKS. The interval 70-74 is G2; that stretch reads GITID. The segment at 91–94 is G3; the sequence is DAPG. GTP contacts are provided by residues 91–95 and 153–156; these read DAPGH and NKMD. Residues 153–156 are G4; the sequence is NKMD. The interval 194–196 is G5; the sequence is SGW. 5-glutamyl glycerylphosphorylethanolamine occurs at positions 301 and 374.

This sequence belongs to the TRAFAC class translation factor GTPase superfamily. Classic translation factor GTPase family. EF-Tu/EF-1A subfamily. As to expression, oocyte.

Its subcellular location is the cytoplasm. Its function is as follows. This protein promotes the GTP-dependent binding of aminoacyl-tRNA to the A-site of ribosomes during protein biosynthesis. The sequence is that of Elongation factor 1-alpha, oocyte form from Xenopus laevis (African clawed frog).